The following is a 208-amino-acid chain: 2,3-bisphosphoglycerate-dependent phosphoglycerate mutase (208 aa).

Residues 9-16 (RHGQSEWN), 22-23 (TG), arginine 61, 88-91 (ERDY), lysine 99, 115-116 (RR), and 159-160 (GN) contribute to the substrate site. The active-site Tele-phosphohistidine intermediate is histidine 10. The active-site Proton donor/acceptor is the glutamate 88.

Belongs to the phosphoglycerate mutase family. BPG-dependent PGAM subfamily. Homodimer.

It carries out the reaction (2R)-2-phosphoglycerate = (2R)-3-phosphoglycerate. The protein operates within carbohydrate degradation; glycolysis; pyruvate from D-glyceraldehyde 3-phosphate: step 3/5. Functionally, catalyzes the interconversion of 2-phosphoglycerate and 3-phosphoglycerate. The sequence is that of 2,3-bisphosphoglycerate-dependent phosphoglycerate mutase from Methylobacterium sp. (strain 4-46).